Consider the following 123-residue polypeptide: Large ribosomal subunit protein uL29 (123 aa).

This sequence belongs to the universal ribosomal protein uL29 family.

The chain is Large ribosomal subunit protein uL29 (RPL35) from Euphorbia esula (Leafy spurge).